Here is a 433-residue protein sequence, read N- to C-terminus: UPF0597 protein PG_0909 (433 aa).

This sequence belongs to the UPF0597 family.

The chain is UPF0597 protein PG_0909 from Porphyromonas gingivalis (strain ATCC BAA-308 / W83).